Here is a 282-residue protein sequence, read N- to C-terminus: uncharacterized protein (282 aa).

Tyr-50 (proton donor) is an active-site residue. Position 115 (His-115) interacts with substrate.

This sequence belongs to the aldo/keto reductase family.

This is an uncharacterized protein from Saccharomyces cerevisiae (strain ATCC 204508 / S288c) (Baker's yeast).